Consider the following 161-residue polypeptide: Nucleotide-binding protein swp_1151 (161 aa).

Belongs to the YajQ family.

Functionally, nucleotide-binding protein. This chain is Nucleotide-binding protein swp_1151, found in Shewanella piezotolerans (strain WP3 / JCM 13877).